A 491-amino-acid chain; its full sequence is Cysteine--tRNA ligase (491 aa).

Position 31 (Cys-31) interacts with Zn(2+). Positions 33-43 (PTVYGDAHLGH) match the 'HIGH' region motif. Zn(2+) contacts are provided by Cys-226, His-251, and Glu-255. Residues 283 to 287 (KMGKS) carry the 'KMSKS' region motif. Lys-286 lines the ATP pocket.

Belongs to the class-I aminoacyl-tRNA synthetase family. As to quaternary structure, monomer. It depends on Zn(2+) as a cofactor.

It is found in the cytoplasm. It catalyses the reaction tRNA(Cys) + L-cysteine + ATP = L-cysteinyl-tRNA(Cys) + AMP + diphosphate. This Bacteroides fragilis (strain ATCC 25285 / DSM 2151 / CCUG 4856 / JCM 11019 / LMG 10263 / NCTC 9343 / Onslow / VPI 2553 / EN-2) protein is Cysteine--tRNA ligase.